Here is a 113-residue protein sequence, read N- to C-terminus: UPF0060 membrane protein Mmcs_2513 (113 aa).

4 consecutive transmembrane segments (helical) span residues 12–32 (ALFV…WQGV), 37–57 (GWIW…VAAF), 66–86 (ILAA…VVVD), and 92–112 (RWDL…MYAP).

Belongs to the UPF0060 family.

It is found in the cell membrane. The polypeptide is UPF0060 membrane protein Mmcs_2513 (Mycobacterium sp. (strain MCS)).